The chain runs to 394 residues: MKSFLVDQDGYYGEFGGAYVPEILHKCVEELKNTYLGVLESEDFKKEFDQLLRDYVGRPSPLYLARRLSEKYGCKMYLKREDLNHTGAHKINNTIGQILLARRMGKKRIIAETGAGQHGVATATVCALMDMECIVYMGKTDVERQHINVEKMKMLGATVIPVTSGNMTLKDATNEAIRDWCCHPADTYYIIGSTVGPHPYPDMVARLQSVISEEIKKQLMEKEGRDHPDYLIACVGGGSNAAGTIYHYINDGRVGIILAEAGGKGIETGMTAATIQLGKMGIIHGARTYVIQNEDGQIEEPYSISAGLDYPGIGPIHANLAAQRRATVLAVNDDEAIEAAYELTKLEGIIPALESAHALGALKKLKFKPEDVVVLTVSGRGDKDIETYLSFNEK.

At Lys-90 the chain carries N6-(pyridoxal phosphate)lysine.

Belongs to the TrpB family. In terms of assembly, tetramer of two alpha and two beta chains. Pyridoxal 5'-phosphate is required as a cofactor.

The catalysed reaction is (1S,2R)-1-C-(indol-3-yl)glycerol 3-phosphate + L-serine = D-glyceraldehyde 3-phosphate + L-tryptophan + H2O. It functions in the pathway amino-acid biosynthesis; L-tryptophan biosynthesis; L-tryptophan from chorismate: step 5/5. The beta subunit is responsible for the synthesis of L-tryptophan from indole and L-serine. This Bacteroides thetaiotaomicron (strain ATCC 29148 / DSM 2079 / JCM 5827 / CCUG 10774 / NCTC 10582 / VPI-5482 / E50) protein is Tryptophan synthase beta chain.